The chain runs to 273 residues: Putative phosphoenolpyruvate synthase regulatory protein (273 aa).

Position 154–161 (154–161 (GVSRSGKT)) interacts with ADP.

It belongs to the pyruvate, phosphate/water dikinase regulatory protein family. PSRP subfamily.

It catalyses the reaction [pyruvate, water dikinase] + ADP = [pyruvate, water dikinase]-phosphate + AMP + H(+). It carries out the reaction [pyruvate, water dikinase]-phosphate + phosphate + H(+) = [pyruvate, water dikinase] + diphosphate. In terms of biological role, bifunctional serine/threonine kinase and phosphorylase involved in the regulation of the phosphoenolpyruvate synthase (PEPS) by catalyzing its phosphorylation/dephosphorylation. This chain is Putative phosphoenolpyruvate synthase regulatory protein, found in Neisseria gonorrhoeae (strain ATCC 700825 / FA 1090).